A 610-amino-acid chain; its full sequence is Zinc finger protein 823 (610 aa).

A KRAB domain is found at 4 to 97 (VAFEDVAVNF…VNKNTPRVNP (94 aa)). 10 C2H2-type zinc fingers span residues 164–186 (FDCKECAKTFSSLGNLRRHMAAH), 192–214 (YKCKLCGKAFVWPSLFHLHERTH), 220–242 (YECKQCSKAFPFYSSYLRHERIH), 248–270 (YECKQCSKAFPDYSTYLRHERTH), 276–298 (YKCTQCGKAFSCYYYTRLHERTH), 304–326 (YACKQCGKTFYHHTSFRRHMIRH), 332–354 (HKCKICGKGFDCPSSVRNHETTH), 360–382 (YECKQCGKVLSHSSSFRSHMITH), 388–410 (QKCKICGKAFGCPSLFQRHERTH), and 416–438 (YQCKQCGKAFSLAGSLRRHEATH). The segment at 444–465 (YKCQCGKAFSDLSSFQNHETTH) adopts a C2H2-type 11; atypical zinc-finger fold. 5 consecutive C2H2-type zinc fingers follow at residues 471–493 (YECKECGKAFSCFKYLSQHKRTH), 499–521 (YECKTCRKAFSHFSNLKVHERIH), 527–549 (YECKECGKAFSWLTCLLRHERIH), 555–577 (YECLQCGKAFTRSRFLRGHEKTH), and 583–605 (YECKECGKALSSLRSLHRHKRTH).

The protein belongs to the krueppel C2H2-type zinc-finger protein family.

The protein resides in the nucleus. Its function is as follows. May be involved in transcriptional regulation. In Homo sapiens (Human), this protein is Zinc finger protein 823 (ZNF823).